A 301-amino-acid polypeptide reads, in one-letter code: 5'-3' exonuclease (301 aa).

A 5'-3' exonuclease domain is found at glycine 182–aspartate 264.

Its function is as follows. 5'-3' exonuclease acting preferentially on double-stranded DNA. In Streptomyces coelicolor (strain ATCC BAA-471 / A3(2) / M145), this protein is 5'-3' exonuclease.